The primary structure comprises 132 residues: ATP synthase epsilon chain, chloroplastic (132 aa).

Threonine 2 carries the post-translational modification N-acetylthreonine.

The protein belongs to the ATPase epsilon chain family. As to quaternary structure, F-type ATPases have 2 components, CF(1) - the catalytic core - and CF(0) - the membrane proton channel. CF(1) has five subunits: alpha(3), beta(3), gamma(1), delta(1), epsilon(1). CF(0) has three main subunits: a, b and c.

The protein localises to the plastid. It is found in the chloroplast thylakoid membrane. In terms of biological role, produces ATP from ADP in the presence of a proton gradient across the membrane. The polypeptide is ATP synthase epsilon chain, chloroplastic (Arabidopsis thaliana (Mouse-ear cress)).